The following is a 666-amino-acid chain: UvrABC system protein B (666 aa).

Residues 25–412 (EQVQAGAPYQ…EEQIVEQVIR (388 aa)) form the Helicase ATP-binding domain. 38 to 45 (GATGTGKT) contributes to the ATP binding site. The Beta-hairpin signature appears at 91–114 (YYDYYQPEAYIPVTDTYIAKTASI). Positions 429–595 (QVDDLLAEIQ…PIIKRSSNAI (167 aa)) constitute a Helicase C-terminal domain. Residues 626 to 661 (PNLITQLEAQMKEAAKNLEFEEAAQYRDRIKKLRER) enclose the UVR domain.

The protein belongs to the UvrB family. As to quaternary structure, forms a heterotetramer with UvrA during the search for lesions. Interacts with UvrC in an incision complex.

It localises to the cytoplasm. Functionally, the UvrABC repair system catalyzes the recognition and processing of DNA lesions. A damage recognition complex composed of 2 UvrA and 2 UvrB subunits scans DNA for abnormalities. Upon binding of the UvrA(2)B(2) complex to a putative damaged site, the DNA wraps around one UvrB monomer. DNA wrap is dependent on ATP binding by UvrB and probably causes local melting of the DNA helix, facilitating insertion of UvrB beta-hairpin between the DNA strands. Then UvrB probes one DNA strand for the presence of a lesion. If a lesion is found the UvrA subunits dissociate and the UvrB-DNA preincision complex is formed. This complex is subsequently bound by UvrC and the second UvrB is released. If no lesion is found, the DNA wraps around the other UvrB subunit that will check the other stand for damage. The protein is UvrABC system protein B of Synechococcus sp. (strain ATCC 27144 / PCC 6301 / SAUG 1402/1) (Anacystis nidulans).